The following is a 329-amino-acid chain: tRNA-modifying protein YgfZ (329 aa).

2 residues coordinate folate: Trp27 and Trp189.

Belongs to the tRNA-modifying YgfZ family.

It is found in the cytoplasm. Functionally, folate-binding protein involved in regulating the level of ATP-DnaA and in the modification of some tRNAs. It is probably a key factor in regulatory networks that act via tRNA modification, such as initiation of chromosomal replication. The chain is tRNA-modifying protein YgfZ from Cronobacter sakazakii (strain ATCC BAA-894) (Enterobacter sakazakii).